Here is a 479-residue protein sequence, read N- to C-terminus: Solute carrier family 46 member 2 (479 aa).

Topologically, residues methionine 1–glutamate 23 are cytoplasmic. The helical transmembrane segment at proline 24 to valine 44 threads the bilayer. Residues lysine 45–asparagine 80 lie on the Extracellular side of the membrane. Residues asparagine 57 and asparagine 61 are each glycosylated (N-linked (GlcNAc...) asparagine). Residues isoleucine 81 to leucine 101 form a helical membrane-spanning segment. Over serine 102 to serine 110 the chain is Cytoplasmic. The chain crosses the membrane as a helical span at residues isoleucine 111–leucine 131. At aspartate 132–glycine 140 the chain is on the extracellular side. A helical transmembrane segment spans residues alanine 141–leucine 161. Topologically, residues glycine 162–arginine 174 are cytoplasmic. A helical membrane pass occupies residues leucine 175–histidine 195. The Extracellular segment spans residues leucine 196–glycine 207. The chain crosses the membrane as a helical span at residues leucine 208–valine 228. Topologically, residues leucine 229–arginine 281 are cytoplasmic. The tract at residues threonine 255–lysine 277 is disordered. Residues glutamate 282 to valine 302 form a helical membrane-spanning segment. Residues aspartate 303–leucine 321 lie on the Extracellular side of the membrane. Residues glycine 322–phenylalanine 342 form a helical membrane-spanning segment. Residues serine 343 to aspartate 348 lie on the Cytoplasmic side of the membrane. The helical transmembrane segment at threonine 349–valine 369 threads the bilayer. Residues lysine 370–glutamate 371 lie on the Extracellular side of the membrane. A helical transmembrane segment spans residues threonine 372–isoleucine 392. Over arginine 393–lysine 407 the chain is Cytoplasmic. Residues isoleucine 408–asparagine 428 traverse the membrane as a helical segment. The Extracellular portion of the chain corresponds to lysine 429–threonine 441. A helical transmembrane segment spans residues cysteine 442–tyrosine 462. Residues lysine 463–serine 479 lie on the Cytoplasmic side of the membrane.

This sequence belongs to the major facilitator superfamily. SLC46A family. In terms of processing, glycosylated. In terms of tissue distribution, expressed on cortical epithelial cells in the thymus. Mainly expressed in the thymic cortex and is highly enriched in SCID thymus. Also expressed in lymph nodes, heart, fetal liver, brain, spleen, intestine and kidney, but not in adult liver, skin, skeletal muscle and lung. Expressed in skin epidermis.

It localises to the endosome membrane. Its subcellular location is the cell membrane. It carries out the reaction N-acetyl-beta-D-glucosaminyl-(1-&gt;4)-1,6-anhydro-N-acetyl-beta-D-muramoyl-L-alanyl-gamma-D-glutamyl-meso-2,6-diaminopimeloyl-D-alanine(out) + n H(+)(out) = N-acetyl-beta-D-glucosaminyl-(1-&gt;4)-1,6-anhydro-N-acetyl-beta-D-muramoyl-L-alanyl-gamma-D-glutamyl-meso-2,6-diaminopimeloyl-D-alanine(in) + n H(+)(in). The catalysed reaction is L-alanyl-gamma-D-glutamyl-meso-2,6-diaminopimelate(out) + n H(+)(out) = L-alanyl-gamma-D-glutamyl-meso-2,6-diaminopimelate(in) + n H(+)(in). It catalyses the reaction N-acetyl-D-muramoyl-L-alanyl-D-isoglutamine(out) + n H(+)(out) = N-acetyl-D-muramoyl-L-alanyl-D-isoglutamine(in) + n H(+)(in). The enzyme catalyses 2',3'-cGAMP(out) + n H(+)(out) = 2',3'-cGAMP(in) + n H(+)(in). It carries out the reaction 3',3'-cGAMP(out) + n H(+)(out) = 3',3'-cGAMP(in) + n H(+)(in). Down-regulated by the anti-inflammatory drug methotrexate. Proton-coupled transporter that delivers pathogen-associated or danger-associated molecular patterns to cytosolic pattern recognition receptors as part of the innate immune response to microbes or tissue injury. Has selectivity toward muropeptides that contain the amino acid diaminopimelic acid (DAP-type peptidoglycan muropeptides) including Tri-DAP and tracheal toxin (TCT), common in Gram-negative bacteria and Gram-positive bacilli. In the context of immune recognition of skin microbiota, shuttles bacterial muropeptides across the endolysosomal membranes into the cytosol for recognition by NOD1, triggering MYD88-dependent secretion of IL1A and neutrophil recruitment in a pyroptosis-type inflammatory process. To a lesser extent and redundantly, transports muramyl dipeptides derived from most bacterial proteoglycans, eliciting NOD2 receptor activation and downstream inflammatory responses. Postulated to function as an importer of cyclic GMP-AMP dinucleotides (cGAMPs) in monocyte and macrophage cell lineages. Selectively imports cGAMPs derived from pathogenic bacteria such as 3'3'-cGAMP thus providing for differential immune recognition of pathogenic versus commensal bacteria. During tumorigenesis may transport extracellular tumor-derived 2'3'-cGAMP across the plasma membrane of M1-polarized macrophages to activate the anti-tumoral stimulator of interferon genes (STING) pathway. The transport mechanism, its electrogenicity and stoichiometry remain to be elucidated. This Mus musculus (Mouse) protein is Solute carrier family 46 member 2.